The sequence spans 316 residues: MANNEESRGLKSLFDWFANRRKAGATNPERQEREIADGLWHKCSKCGVLTYTKDLRANQMVCVECGHHNRVDSDERIRQLIDQNTWRPMDENLRATDPLQFRDRKAYSDRLREMEDKLGLLDAVKTGLGQINSSPVALAVMDFRFMGGSMGSVVGEKITRLIEQATQRRYPVVIICTSGGARMQEGMLSLMQMAKISAALERHRDARLLYIPVLTNPTTGGVTASFAMLGDIILAEPKATIGFAGRRVIEQTLREKLPDDFQTAEDLLKHGFVDDIVPRTQLKNTLSQLIALHQPVPTTPPMVLWETMSLSSTAVE.

Residues 39–308 enclose the CoA carboxyltransferase N-terminal domain; it reads LWHKCSKCGV…TPPMVLWETM (270 aa). Zn(2+) contacts are provided by C43, C46, C62, and C65. Residues 43–65 form a C4-type zinc finger; the sequence is CSKCGVLTYTKDLRANQMVCVEC.

The protein belongs to the AccD/PCCB family. Acetyl-CoA carboxylase is a heterohexamer composed of biotin carboxyl carrier protein (AccB), biotin carboxylase (AccC) and two subunits each of ACCase subunit alpha (AccA) and ACCase subunit beta (AccD). Zn(2+) serves as cofactor.

The protein localises to the cytoplasm. The enzyme catalyses N(6)-carboxybiotinyl-L-lysyl-[protein] + acetyl-CoA = N(6)-biotinyl-L-lysyl-[protein] + malonyl-CoA. The protein operates within lipid metabolism; malonyl-CoA biosynthesis; malonyl-CoA from acetyl-CoA: step 1/1. Component of the acetyl coenzyme A carboxylase (ACC) complex. Biotin carboxylase (BC) catalyzes the carboxylation of biotin on its carrier protein (BCCP) and then the CO(2) group is transferred by the transcarboxylase to acetyl-CoA to form malonyl-CoA. The chain is Acetyl-coenzyme A carboxylase carboxyl transferase subunit beta from Nostoc sp. (strain PCC 7120 / SAG 25.82 / UTEX 2576).